The sequence spans 244 residues: MNEIREAVVQTPEQATAVIRAEALAKTYAEGKMRTPVFDGLDLSVATGETVAIVGASGAGKSTLLHLLGGLDIPTAGEVYVAGERMSALSDAQRGKLRNQSLGFVYQFHHLLPEFTALENVMMPVLLSGKNVAVAKGQALQLLESVGLGHRIDHKPSELSGGERQRCAVARALVNKPGCVLGDEPTGNLDDKTAGTVFELMLELNRAQRTSLVLVTHDRGLARRLDRVLELHQGKLRELAPSAV.

The ABC transporter domain maps to 19-244 (IRAEALAKTY…KLRELAPSAV (226 aa)). 55-62 (GASGAGKS) contacts ATP.

This sequence belongs to the ABC transporter superfamily. Lipoprotein translocase (TC 3.A.1.125) family. As to quaternary structure, the complex is composed of two ATP-binding proteins (LolD) and two transmembrane proteins (LolC and LolE).

It localises to the cell inner membrane. Its function is as follows. Part of the ABC transporter complex LolCDE involved in the translocation of mature outer membrane-directed lipoproteins, from the inner membrane to the periplasmic chaperone, LolA. Responsible for the formation of the LolA-lipoprotein complex in an ATP-dependent manner. The protein is Lipoprotein-releasing system ATP-binding protein LolD of Xanthomonas oryzae pv. oryzae (strain MAFF 311018).